We begin with the raw amino-acid sequence, 190 residues long: Xanthine phosphoribosyltransferase (190 aa).

Xanthine contacts are provided by L20 and N27. Residue 129–133 (ASGSA) coordinates 5-phospho-alpha-D-ribose 1-diphosphate. Residue K157 coordinates xanthine.

It belongs to the purine/pyrimidine phosphoribosyltransferase family. Xpt subfamily. In terms of assembly, homodimer.

It is found in the cytoplasm. It carries out the reaction XMP + diphosphate = xanthine + 5-phospho-alpha-D-ribose 1-diphosphate. It functions in the pathway purine metabolism; XMP biosynthesis via salvage pathway; XMP from xanthine: step 1/1. Converts the preformed base xanthine, a product of nucleic acid breakdown, to xanthosine 5'-monophosphate (XMP), so it can be reused for RNA or DNA synthesis. This is Xanthine phosphoribosyltransferase from Clostridium tetani (strain Massachusetts / E88).